A 136-amino-acid chain; its full sequence is Orexigenic neuropeptide QRFP (136 aa).

A signal peptide spans 1–18 (MVRPYPLIYFLFLPLGAC). A propeptide spanning residues 19–90 (FPLLDRREPT…HAGCRFRFGR (72 aa)) is cleaved from the precursor. Residue glutamine 91 is modified to Pyrrolidone carboxylic acid. Phenylalanine 133 carries the phenylalanine amide modification.

This sequence belongs to the RFamide neuropeptide family. Ligand for the G-protein coupled receptor QRFPR/GPR103. Expressed widely in the brain with highest expression levels in the cerebellum, medulla, pituitary, retina, vestibular nucleus, and white matter. Also expressed in the bladder, colon, coronary artery, parathyroid gland, prostate, testis, and thyroid.

The protein localises to the secreted. Its function is as follows. Stimulates feeding behavior, metabolic rate and locomotor activity and increases blood pressure. May have orexigenic activity. May promote aldosterone secretion by the adrenal gland. The polypeptide is Orexigenic neuropeptide QRFP (Homo sapiens (Human)).